We begin with the raw amino-acid sequence, 207 residues long: Transcription factor DYT1 (207 aa).

The interval M1–R38 is disordered. Residues N28 to L77 form the bHLH domain.

Homodimer. In terms of tissue distribution, mostly expressed in anthers, and, to a lower extent, in young inflorescences undergoing meiosis and siliques.

The protein localises to the nucleus. Functionally, transcription factor. Involved in the control of tapetum development. Required for male fertility and pollen differentiation, especially during callose deposition. In Arabidopsis thaliana (Mouse-ear cress), this protein is Transcription factor DYT1.